The primary structure comprises 321 residues: ATP-dependent 6-phosphofructokinase (321 aa).

Residue Gly12 participates in ATP binding. 22–26 (RGVVR) contacts ADP. Residues 73-74 (RF) and 103-106 (GDGS) each bind ATP. Asp104 serves as a coordination point for Mg(2+). 127–129 (TID) contributes to the substrate binding site. The Proton acceptor role is filled by Asp129. Arg156 lines the ADP pocket. Residues Arg164 and 171-173 (MGR) each bind substrate. ADP contacts are provided by residues 187–189 (GCE), Lys213, and 215–217 (KRH). Substrate is bound by residues Glu224, Arg245, and 251–254 (HTQR).

The protein belongs to the phosphofructokinase type A (PFKA) family. ATP-dependent PFK group I subfamily. Prokaryotic clade 'B1' sub-subfamily. Homotetramer. Mg(2+) is required as a cofactor.

It is found in the cytoplasm. It carries out the reaction beta-D-fructose 6-phosphate + ATP = beta-D-fructose 1,6-bisphosphate + ADP + H(+). It functions in the pathway carbohydrate degradation; glycolysis; D-glyceraldehyde 3-phosphate and glycerone phosphate from D-glucose: step 3/4. Allosterically activated by ADP and other diphosphonucleosides, and allosterically inhibited by phosphoenolpyruvate. Functionally, catalyzes the phosphorylation of D-fructose 6-phosphate to fructose 1,6-bisphosphate by ATP, the first committing step of glycolysis. This is ATP-dependent 6-phosphofructokinase from Glaesserella parasuis serovar 5 (strain SH0165) (Haemophilus parasuis).